A 460-amino-acid chain; its full sequence is MKRADLAGRKVSVIGAGRSGNAAVELLLCHGARVLLSEKGALDPDTALRFRQRGAEVESEGHSDRVFDADFAVVSPGVPPGVPVIRELERRQIPVHSEIELASWFCRARIAGITGTDGKTTTATLVQRMAEAVGRLGGYRAYGVGNIGVPFSSKVEEMEERDIAVVELSSYQLERCSSFRPEAALITNITPDHLDRYGGDIMRYADAKYRIAMNLGSSGTLVYNADDPILRARFSVGGLQFSTVPFSTAGPVGGDPSSGIYLEDGWVHAGLRRLIHTSEFQKGSFRGNHNNSNVLGAIGLARALRLDEKAVLQALREFPGVEHRQEFVASKRGSDWINDSKATNVNAMRQALEAVPGRIVLIAGGRDKGNDYSAVATLVREKADLVVAMGESRQKVADAFRADVAVVEAATLEDAVRLAAGGAGTGRTVLFSPGCASFDLFRDFEDRGRSFKAEVGRLEA.

Residue 115-121 (GTDGKTT) participates in ATP binding.

Belongs to the MurCDEF family.

It localises to the cytoplasm. It carries out the reaction UDP-N-acetyl-alpha-D-muramoyl-L-alanine + D-glutamate + ATP = UDP-N-acetyl-alpha-D-muramoyl-L-alanyl-D-glutamate + ADP + phosphate + H(+). Its pathway is cell wall biogenesis; peptidoglycan biosynthesis. Its function is as follows. Cell wall formation. Catalyzes the addition of glutamate to the nucleotide precursor UDP-N-acetylmuramoyl-L-alanine (UMA). This is UDP-N-acetylmuramoylalanine--D-glutamate ligase from Chlorobium luteolum (strain DSM 273 / BCRC 81028 / 2530) (Pelodictyon luteolum).